A 272-amino-acid polypeptide reads, in one-letter code: 4-hydroxy-tetrahydrodipicolinate reductase (272 aa).

Position 10-15 (10-15 (GAAGRM)) interacts with NAD(+). Position 37 (Arg37) interacts with NADP(+). NAD(+)-binding positions include 100–102 (GTT) and 124–127 (SGNM). The active-site Proton donor/acceptor is His157. His158 is a (S)-2,3,4,5-tetrahydrodipicolinate binding site. The active-site Proton donor is Lys161. 167 to 168 (GT) is a binding site for (S)-2,3,4,5-tetrahydrodipicolinate.

The protein belongs to the DapB family.

Its subcellular location is the cytoplasm. The enzyme catalyses (S)-2,3,4,5-tetrahydrodipicolinate + NAD(+) + H2O = (2S,4S)-4-hydroxy-2,3,4,5-tetrahydrodipicolinate + NADH + H(+). It carries out the reaction (S)-2,3,4,5-tetrahydrodipicolinate + NADP(+) + H2O = (2S,4S)-4-hydroxy-2,3,4,5-tetrahydrodipicolinate + NADPH + H(+). It functions in the pathway amino-acid biosynthesis; L-lysine biosynthesis via DAP pathway; (S)-tetrahydrodipicolinate from L-aspartate: step 4/4. Catalyzes the conversion of 4-hydroxy-tetrahydrodipicolinate (HTPA) to tetrahydrodipicolinate. This Methylocella silvestris (strain DSM 15510 / CIP 108128 / LMG 27833 / NCIMB 13906 / BL2) protein is 4-hydroxy-tetrahydrodipicolinate reductase.